The primary structure comprises 212 residues: Peptidyl-prolyl cis-trans isomerase-like 3 (212 aa).

The PPIase cyclophilin-type domain maps to 1–198 (MSVTLHTTHG…EGEEGGYEAI (198 aa)).

The protein belongs to the cyclophilin-type PPIase family. PPIL3 subfamily.

The enzyme catalyses [protein]-peptidylproline (omega=180) = [protein]-peptidylproline (omega=0). PPIases accelerate the folding of proteins. It catalyzes the cis-trans isomerization of proline imidic peptide bonds in oligopeptides. This Aspergillus fumigatus (strain ATCC MYA-4609 / CBS 101355 / FGSC A1100 / Af293) (Neosartorya fumigata) protein is Peptidyl-prolyl cis-trans isomerase-like 3 (cyp10).